The sequence spans 293 residues: Protease HtpX homolog (293 aa).

2 helical membrane-spanning segments follow: residues 7–26 (ASLL…ALLG) and 30–49 (GMVM…WYYS). Zn(2+) is bound at residue H131. The active site involves E132. H135 serves as a coordination point for Zn(2+). A run of 2 helical transmembrane segments spans residues 148–168 (ATLA…FWFF) and 180–200 (IGAL…QLGI). A Zn(2+)-binding site is contributed by E205.

This sequence belongs to the peptidase M48B family. Zn(2+) is required as a cofactor.

The protein localises to the cell inner membrane. The protein is Protease HtpX homolog of Acaryochloris marina (strain MBIC 11017).